The primary structure comprises 747 residues: Protein PHTF2 (747 aa).

Residues 6 to 153 form the PHTF domain; the sequence is TDAIVWYQKK…VHCQIVSTRT (148 aa). The next 2 helical transmembrane spans lie at 98-118 and 126-146; these read VIFS…VLFC and IPLT…TVHC. 2 disordered regions span residues 170–192 and 268–365; these read KAAH…TQEG and EDAA…SETE. Residues 172-181 show a composition bias toward basic and acidic residues; the sequence is AHLEVHREGD. The segment covering 182-192 has biased composition (polar residues); sequence GSSTTDNTQEG. N-linked (GlcNAc...) asparagine glycosylation is present at Asn291. A compositionally biased stretch (basic residues) spans 321-331; that stretch reads RNRKPHHYKKH. Residues 340–352 show a composition bias toward low complexity; it reads SGTSCSSRCSSSR. Residues 353–362 are compositionally biased toward basic and acidic residues; the sequence is QDSESTRPES. A run of 4 helical transmembrane segments spans residues 459–479, 515–535, 596–616, and 630–650; these read IGYQ…PFVF, VLIS…LLCV, VIVS…CAQL, and WELV…VTLG. N-linked (GlcNAc...) asparagine glycans are attached at residues Asn659 and Asn718. The helical transmembrane segment at 722-742 threads the bilayer; that stretch reads VVILSAVSGVISDLLGFNLKL.

The protein resides in the membrane. The sequence is that of Protein PHTF2 (Phtf2) from Mus musculus (Mouse).